An 855-amino-acid chain; its full sequence is RE1-silencing transcription factor (855 aa).

The C2H2-type 1 zinc finger occupies 141-163; the sequence is FFCKPCQYQGENEQEFIVHIRTH. The interval 172–199 is disordered; that stretch reads NGGDSDEDLSADAGPQTSVPNAESAESN. Residues 186 to 199 are compositionally biased toward polar residues; sequence PQTSVPNAESAESN. 7 C2H2-type zinc fingers span residues 204 to 226, 236 to 258, 264 to 286, 292 to 314, 320 to 343, 349 to 371, and 377 to 400; these read IRCE…LKHH, FKCT…LRNH, FTCS…IRTH, FQCI…MRTH, FKCD…RQVH, LSCP…VELH, and FLCP…KSRH. The segment at 458–811 is disordered; that stretch reads NAVVETEKSS…ETPTEERDAS (354 aa). 3 stretches are compositionally biased toward basic and acidic residues: residues 462–472, 481–496, and 504–535; these read ETEKSSKKNMD, NEKK…EKTA, and AVKD…EKAL. Positions 548–569 are enriched in polar residues; sequence SSVQQQSDDCEQTQHTPQQNET. A compositionally biased stretch (basic and acidic residues) spans 570–580; sequence QENRPEKENRS. Basic residues predominate over residues 594 to 604; the sequence is QTKKPCKKQTK. The segment covering 628–638 has biased composition (basic and acidic residues); the sequence is RKAENPAEPKQ. Over residues 639-648 the composition is skewed to basic residues; that stretch reads RIKRTKKKKD. Polar residues predominate over residues 652 to 662; it reads PTTSEANQTNP. 2 stretches are compositionally biased toward basic and acidic residues: residues 711-721 and 799-811; these read PAVEDVQRPLE and KLPE…RDAS. Residues 818-840 form a C2H2-type 9 zinc finger; it reads HTCIFCDRSFALEMDYRKHLNRH.

It is found in the nucleus. Its subcellular location is the cytoplasm. In terms of biological role, transcriptional repressor which binds neuron-restrictive silencer element (NRSE) and represses neuronal gene transcription in non-neuronal cells. The protein is RE1-silencing transcription factor (rest) of Danio rerio (Zebrafish).